The following is a 343-amino-acid chain: uncharacterized protein (343 aa).

This is an uncharacterized protein from Acanthamoeba polyphaga mimivirus (APMV).